Consider the following 462-residue polypeptide: Flavin-containing monooxygenase FMO GS-OX3 (462 aa).

Glycine 17–glycine 22 provides a ligand contact to FAD. Glycine 212–glycine 217 lines the NADP(+) pocket. Residues alanine 318–phenylalanine 338 form a helical membrane-spanning segment.

This sequence belongs to the FMO family.

The protein localises to the membrane. It catalyses the reaction a (Z)-omega-(methylsulfanyl)-N-sulfo-alkylhydroximate S-glucoside + NADPH + O2 + H(+) = a (Z)-omega-(methylsulfinyl)-alkyl-glucosinolate + NADP(+) + H2O. Catalyzes the conversion of methylthioalkyl glucosinolates of any chain length into methylsulfinylalkyl glucosinolates. Prefers probably short-chain methylthioalkyl glucosinolates in cv. Landsberg erecta. This chain is Flavin-containing monooxygenase FMO GS-OX3 (FMOGS-OX3), found in Arabidopsis thaliana (Mouse-ear cress).